The chain runs to 133 residues: Small ribosomal subunit protein uS8 (133 aa).

The protein belongs to the universal ribosomal protein uS8 family. As to quaternary structure, part of the 30S ribosomal subunit.

One of the primary rRNA binding proteins, it binds directly to 16S rRNA central domain where it helps coordinate assembly of the platform of the 30S subunit. This chain is Small ribosomal subunit protein uS8, found in Aeropyrum pernix (strain ATCC 700893 / DSM 11879 / JCM 9820 / NBRC 100138 / K1).